Reading from the N-terminus, the 390-residue chain is Chorismate synthase (390 aa).

NADP(+) is bound by residues R39 and R45. Residues 132–134, 253–254, G298, 313–317, and R339 contribute to the FMN site; these read RSS, NA, and KPIPT.

It belongs to the chorismate synthase family. Homotetramer. FMNH2 serves as cofactor.

It carries out the reaction 5-O-(1-carboxyvinyl)-3-phosphoshikimate = chorismate + phosphate. The protein operates within metabolic intermediate biosynthesis; chorismate biosynthesis; chorismate from D-erythrose 4-phosphate and phosphoenolpyruvate: step 7/7. In terms of biological role, catalyzes the anti-1,4-elimination of the C-3 phosphate and the C-6 proR hydrogen from 5-enolpyruvylshikimate-3-phosphate (EPSP) to yield chorismate, which is the branch point compound that serves as the starting substrate for the three terminal pathways of aromatic amino acid biosynthesis. This reaction introduces a second double bond into the aromatic ring system. This Bacillus cytotoxicus (strain DSM 22905 / CIP 110041 / 391-98 / NVH 391-98) protein is Chorismate synthase.